Consider the following 349-residue polypeptide: UPF0324 inner membrane protein YeiH (349 aa).

The Periplasmic segment spans residues M1 to T12. A helical transmembrane segment spans residues L13–W32. At G33–S35 the chain is on the cytoplasmic side. The helical transmembrane segment at I36–G58 threads the bilayer. Residues N59–D99 lie on the Periplasmic side of the membrane. A helical membrane pass occupies residues V100–L122. Over G123–K131 the chain is Cytoplasmic. A helical membrane pass occupies residues H132–A151. The Periplasmic segment spans residues T152–K162. The helical transmembrane segment at V163–Y185 threads the bilayer. Topologically, residues P186–K261 are cytoplasmic. A helical membrane pass occupies residues I262 to L283. Residues P284–N289 lie on the Periplasmic side of the membrane. Residues M290 to V312 traverse the membrane as a helical segment. The Cytoplasmic segment spans residues S313–K321. Residues P322 to I344 form a helical membrane-spanning segment. The Periplasmic portion of the chain corresponds to Q345 to A349.

Belongs to the UPF0324 family.

Its subcellular location is the cell inner membrane. The polypeptide is UPF0324 inner membrane protein YeiH (yeiH) (Escherichia coli O157:H7).